We begin with the raw amino-acid sequence, 247 residues long: UPF0309 protein GWCH70_1414 (247 aa).

The SIS domain occupies 31–214 (VSEAIQKGGI…VLMAENGFEP (184 aa)).

It belongs to the UPF0309 family.

In Geobacillus sp. (strain WCH70), this protein is UPF0309 protein GWCH70_1414.